We begin with the raw amino-acid sequence, 552 residues long: MTNTQQQSESIDDNQAQLSKQQNSDNNKKVPRVLMILDGFGHREDDKDNAIAAADMPNLDKIYEQYPHGLISASGEDVGLPDGQFGNSEVGHMNLGAGRVLYQDSTRISSEVASRDFYKNEALVNAVKAANTLGGNVHIMGLLSDGGVHSNQDHIEAMCHSALVHGAKNVFVHCFLDGRDTPPKSADKYINRLRDHIIKLNAHYESGRVQIASIIGRYYAMDRDNRWDRVQKAYELITEGKADRLSTRADGAVQAAYKARETDEFINPTVVIGRDEVPYTVDDNDALIFMNFRADRARELAQAFVLPDHEFSGFARNKQPKLAAFVMLTKYSDVLADNPKTSIAYYPTSLTNTLGEYLQSKGKTQLRIAETEKYAHVTFFFSGGREDEYKGETRILVPSPDVATYDLQPEMSAPEVTDKLVEAIESGQYDVLVVNYANGDMVGHTGIFDAAVQAVEALDVCVGRVAAAVHAAGGDMLITADHGNCEQMQDYESGQVHTQHTTEHVPLIYVGEKKVQVRSGGKLSDVAPTILALMDIEAPKEMTGENLLVAAE.

Polar residues predominate over residues 1 to 25 (MTNTQQQSESIDDNQAQLSKQQNSD). Positions 1–30 (MTNTQQQSESIDDNQAQLSKQQNSDNNKKV) are disordered. Mn(2+)-binding residues include Asp38 and Ser88. Ser88 functions as the Phosphoserine intermediate in the catalytic mechanism. Residues His149, 179–180 (RD), Arg217, Arg223, 293–296 (RADR), and Lys373 contribute to the substrate site. Asp440, His444, Asp481, His482, and His500 together coordinate Mn(2+).

It belongs to the BPG-independent phosphoglycerate mutase family. In terms of assembly, monomer. The cofactor is Mn(2+).

The enzyme catalyses (2R)-2-phosphoglycerate = (2R)-3-phosphoglycerate. It functions in the pathway carbohydrate degradation; glycolysis; pyruvate from D-glyceraldehyde 3-phosphate: step 3/5. Functionally, catalyzes the interconversion of 2-phosphoglycerate and 3-phosphoglycerate. The polypeptide is 2,3-bisphosphoglycerate-independent phosphoglycerate mutase (Psychrobacter arcticus (strain DSM 17307 / VKM B-2377 / 273-4)).